The following is a 364-amino-acid chain: Mannose-1-phosphate guanyltransferase (364 aa).

Belongs to the transferase hexapeptide repeat family.

It localises to the cytoplasm. It carries out the reaction alpha-D-mannose 1-phosphate + GTP + H(+) = GDP-alpha-D-mannose + diphosphate. It functions in the pathway nucleotide-sugar biosynthesis; GDP-alpha-D-mannose biosynthesis; GDP-alpha-D-mannose from alpha-D-mannose 1-phosphate (GTP route): step 1/1. Functionally, involved in cell wall synthesis where it is required for glycosylation. Involved in cell cycle progression through cell-size checkpoint. This Cryptococcus neoformans var. neoformans serotype D (strain B-3501A) (Filobasidiella neoformans) protein is Mannose-1-phosphate guanyltransferase (MPG1).